The chain runs to 208 residues: MGKKRSVSSQRWLKEHFDDQFVQKAQKKGLRSRAVFKLEEIQKRDKLIKKGQTVVDLGAAPGGWSQYVADYFNGDGQIIACDILAMDPIAGVDFLQGDFREESVLEALLERIGGKNVDVVLSDMAPNMSGNGTVDQARSMYLVELALDMCHQVLKPGGSFAVKVFQGQGFESFLKDVRAAFNDVKTRKPESSRARSREVYLVATDYKL.

Positions 62, 64, 82, 98, and 123 each coordinate S-adenosyl-L-methionine. The active-site Proton acceptor is Lys163.

It belongs to the class I-like SAM-binding methyltransferase superfamily. RNA methyltransferase RlmE family.

It localises to the cytoplasm. The catalysed reaction is uridine(2552) in 23S rRNA + S-adenosyl-L-methionine = 2'-O-methyluridine(2552) in 23S rRNA + S-adenosyl-L-homocysteine + H(+). Its function is as follows. Specifically methylates the uridine in position 2552 of 23S rRNA at the 2'-O position of the ribose in the fully assembled 50S ribosomal subunit. This chain is Ribosomal RNA large subunit methyltransferase E, found in Idiomarina loihiensis (strain ATCC BAA-735 / DSM 15497 / L2-TR).